Here is a 200-residue protein sequence, read N- to C-terminus: MYAYVKGKLTHLYPTHVVVETAGVGYEIQTPNSYRFQKHLDHEVLIRTSLIVREDAQLLYGFSSEEEKDMFLSLIKVTGIGPKSALAILATSTPNEVKRAIENENDTYLTKFPGIGKKTARQIVLDLKGKVKITEEDSDSLLQVDATSTVQDQFVQEAMLALEALGYSKRELAKVEKTLNKNKYDSVDEAVKAGLQLVVS.

The interval Met-1–Ser-63 is domain I. The tract at residues Ser-64 to Leu-142 is domain II. The flexible linker stretch occupies residues Gln-143 to Thr-149. Residues Val-150–Ser-200 are domain III.

It belongs to the RuvA family. Homotetramer. Forms an RuvA(8)-RuvB(12)-Holliday junction (HJ) complex. HJ DNA is sandwiched between 2 RuvA tetramers; dsDNA enters through RuvA and exits via RuvB. An RuvB hexamer assembles on each DNA strand where it exits the tetramer. Each RuvB hexamer is contacted by two RuvA subunits (via domain III) on 2 adjacent RuvB subunits; this complex drives branch migration. In the full resolvosome a probable DNA-RuvA(4)-RuvB(12)-RuvC(2) complex forms which resolves the HJ.

The protein localises to the cytoplasm. In terms of biological role, the RuvA-RuvB-RuvC complex processes Holliday junction (HJ) DNA during genetic recombination and DNA repair, while the RuvA-RuvB complex plays an important role in the rescue of blocked DNA replication forks via replication fork reversal (RFR). RuvA specifically binds to HJ cruciform DNA, conferring on it an open structure. The RuvB hexamer acts as an ATP-dependent pump, pulling dsDNA into and through the RuvAB complex. HJ branch migration allows RuvC to scan DNA until it finds its consensus sequence, where it cleaves and resolves the cruciform DNA. This chain is Holliday junction branch migration complex subunit RuvA, found in Staphylococcus aureus (strain Mu3 / ATCC 700698).